We begin with the raw amino-acid sequence, 132 residues long: D-ribose pyranase (132 aa).

The active-site Proton donor is H20. Substrate is bound by residues D28, H99, and 121–123 (YSN).

The protein belongs to the RbsD / FucU family. RbsD subfamily. As to quaternary structure, homodecamer.

It is found in the cytoplasm. The enzyme catalyses beta-D-ribopyranose = beta-D-ribofuranose. It functions in the pathway carbohydrate metabolism; D-ribose degradation; D-ribose 5-phosphate from beta-D-ribopyranose: step 1/2. Catalyzes the interconversion of beta-pyran and beta-furan forms of D-ribose. The sequence is that of D-ribose pyranase from Pseudomonas putida (strain ATCC 47054 / DSM 6125 / CFBP 8728 / NCIMB 11950 / KT2440).